The primary structure comprises 156 residues: ATP synthase subunit b (156 aa).

Residues 7 to 29 form a helical membrane-spanning segment; the sequence is LLGQAIAFALFVWFCMKYVWPPI.

The protein belongs to the ATPase B chain family. In terms of assembly, F-type ATPases have 2 components, F(1) - the catalytic core - and F(0) - the membrane proton channel. F(1) has five subunits: alpha(3), beta(3), gamma(1), delta(1), epsilon(1). F(0) has three main subunits: a(1), b(2) and c(10-14). The alpha and beta chains form an alternating ring which encloses part of the gamma chain. F(1) is attached to F(0) by a central stalk formed by the gamma and epsilon chains, while a peripheral stalk is formed by the delta and b chains.

The protein localises to the cell inner membrane. F(1)F(0) ATP synthase produces ATP from ADP in the presence of a proton or sodium gradient. F-type ATPases consist of two structural domains, F(1) containing the extramembraneous catalytic core and F(0) containing the membrane proton channel, linked together by a central stalk and a peripheral stalk. During catalysis, ATP synthesis in the catalytic domain of F(1) is coupled via a rotary mechanism of the central stalk subunits to proton translocation. In terms of biological role, component of the F(0) channel, it forms part of the peripheral stalk, linking F(1) to F(0). The chain is ATP synthase subunit b from Aliivibrio salmonicida (strain LFI1238) (Vibrio salmonicida (strain LFI1238)).